The sequence spans 306 residues: Agmatinase (306 aa).

The Mn(2+) site is built by His126, Asp149, His151, Asp153, Asp230, and Asp232.

This sequence belongs to the arginase family. Agmatinase subfamily. Mn(2+) serves as cofactor.

It carries out the reaction agmatine + H2O = urea + putrescine. The protein operates within amine and polyamine biosynthesis; putrescine biosynthesis via agmatine pathway; putrescine from agmatine: step 1/1. Its function is as follows. Catalyzes the formation of putrescine from agmatine. This Salmonella agona (strain SL483) protein is Agmatinase.